A 60-amino-acid chain; its full sequence is Mastoparan-VB2 (60 aa).

Positions 1 to 27 are cleaved as a signal peptide; the sequence is MKNTILLLFTAFIFLMGFFGMSADALA. AXPX repeat units follow at residues 27-30, 31-34, 35-38, and 41-44; these read ADPK, ADPL, AGPF, and ADPD. Positions 28–45 are excised as a propeptide; sequence DPKADPLAGPFPDADPDP. Leucine amide is present on Leu-59.

This sequence belongs to the MCD family. Mastoparan subfamily. In terms of tissue distribution, expressed by the venom gland.

The protein resides in the secreted. It localises to the target cell membrane. Functionally, antimicrobial peptide. Shows activity against both Gram-positive and -negative bacteria, as well against fungi. Also promotes moderate mast cell degranulation. Does not show hemolytic activity on rabbit and human erythrocytes. Its mast cell degranulation activity may be related to the activation of G-protein coupled receptors in mast cells as well as interaction with other proteins located in cell endosomal membranes in the mast cells. The chain is Mastoparan-VB2 from Vespa bicolor (Black shield wasp).